The sequence spans 266 residues: Undecaprenyl-diphosphatase (266 aa).

7 helical membrane passes run 41-61 (NLAF…VILW), 82-102 (YVIN…FFKD), 106-126 (AIFG…AALL), 140-160 (ISMK…LPGL), 180-200 (LAQF…LLDG), 213-233 (IPTL…CLAC), and 245-265 (LIYF…VSQL).

This sequence belongs to the UppP family.

It localises to the cell inner membrane. It catalyses the reaction di-trans,octa-cis-undecaprenyl diphosphate + H2O = di-trans,octa-cis-undecaprenyl phosphate + phosphate + H(+). In terms of biological role, catalyzes the dephosphorylation of undecaprenyl diphosphate (UPP). Confers resistance to bacitracin. This Bacteroides fragilis (strain ATCC 25285 / DSM 2151 / CCUG 4856 / JCM 11019 / LMG 10263 / NCTC 9343 / Onslow / VPI 2553 / EN-2) protein is Undecaprenyl-diphosphatase.